Consider the following 356-residue polypeptide: NAC domain-containing protein JA2L (356 aa).

Positions 14–162 (LPPGFRFYPT…DWVLCRIYKK (149 aa)) constitute an NAC domain. A DNA-binding region spans residues 111–168 (VGIKKALVFYIGKAPKGTKTNWIMHEYRLSEPTTKTGSSRLDDWVLCRIYKKNSGGQK). The disordered stretch occupies residues 163 to 191 (NSGGQKSSCSDLQNKDISHASSSSSSSQF). Over residues 164-174 (SGGQKSSCSDL) the composition is skewed to polar residues.

Expressed in guard cells of the epidermis.

The protein resides in the nucleus. In terms of biological role, transcription factor that acts downstream of MYC2 in the jasmonate-mediated response to Botrytis cinerea infection. With MYC2 forms a transcription module that regulates wounding-responsive genes. Involved in jasmonate- and coronatine-mediated stomatal reopening in response to Pseudomonas syringae pv tomato DC3000 infection. Regulates the expression of threonine deaminase 2 (TD2) through promoter binding. The chain is NAC domain-containing protein JA2L from Solanum lycopersicum (Tomato).